The sequence spans 614 residues: UvrABC system protein C (614 aa).

In terms of domain architecture, GIY-YIG spans 14-91 (TSPGCYIHKD…IKENKPKYNI (78 aa)). A UVR domain is found at 196–231 (DKIIDDLKSKMAVAAQSMEFERAAEYRDLIQAIGTL). Positions 595–614 (LPQVAEERVDYQTEGNHNEP) are disordered. Positions 599–614 (AEERVDYQTEGNHNEP) are enriched in basic and acidic residues.

Belongs to the UvrC family. As to quaternary structure, interacts with UvrB in an incision complex.

Its subcellular location is the cytoplasm. In terms of biological role, the UvrABC repair system catalyzes the recognition and processing of DNA lesions. UvrC both incises the 5' and 3' sides of the lesion. The N-terminal half is responsible for the 3' incision and the C-terminal half is responsible for the 5' incision. In Streptococcus pneumoniae serotype 4 (strain ATCC BAA-334 / TIGR4), this protein is UvrABC system protein C.